The sequence spans 461 residues: Putative cytochrome P450 132 (461 aa).

Cysteine 409 contributes to the heme binding site.

The protein belongs to the cytochrome P450 family. The cofactor is heme.

The chain is Putative cytochrome P450 132 (cyp132) from Mycobacterium bovis (strain ATCC BAA-935 / AF2122/97).